Reading from the N-terminus, the 291-residue chain is Ribosomal RNA small subunit methyltransferase I (291 aa).

It belongs to the methyltransferase superfamily. RsmI family.

It localises to the cytoplasm. The enzyme catalyses cytidine(1402) in 16S rRNA + S-adenosyl-L-methionine = 2'-O-methylcytidine(1402) in 16S rRNA + S-adenosyl-L-homocysteine + H(+). Its function is as follows. Catalyzes the 2'-O-methylation of the ribose of cytidine 1402 (C1402) in 16S rRNA. This chain is Ribosomal RNA small subunit methyltransferase I, found in Neisseria meningitidis serogroup B (strain ATCC BAA-335 / MC58).